The chain runs to 366 residues: Inhibin alpha chain (366 aa).

Positions 1 to 20 are cleaved as a signal peptide; the sequence is MVIQPSLLLLLLLTLQDVDS. A propeptide spanning residues 21-63 is cleaved from the precursor; that stretch reads CQGPELVRELVLAKVKALFLDALGPPAMDGEGGGPGIRRLPRR. Residues 64–233 constitute a propeptide, inhibin alpha N-terminal region; that stretch reads HALGGFMHRT…APSAGERARR (170 aa). N147 and N269 each carry an N-linked (GlcNAc...) asparagine glycan. Disulfide bonds link C263–C328, C292–C363, and C296–C365.

It belongs to the TGF-beta family. Dimeric, linked by one or more disulfide bonds. Activin B is a dimer of alpha and beta-B. Inhibin A is a dimer of alpha and beta-A. Inhibin B is a dimer of alpha and beta-B. Interacts with TGFBR3L; this interaction regulates female fertility. Post-translationally, proteolytic processing yields a number of bioactive forms, consisting either solely of the mature alpha chain, of the most N-terminal propeptide linked through a disulfide bond to the mature alpha chain, or of the entire proprotein. Mainly expressed in ovary and testis. Alpha- and beta-B-subunits are the predominant forms found in testis. Also found in placenta, pituitary, adrenal gland, bone marrow, kidney, spinal cord and brain.

The protein localises to the secreted. Functionally, inhibins and activins inhibit and activate, respectively, the secretion of follitropin by the pituitary gland. Inhibins/activins are involved in regulating a number of diverse functions such as hypothalamic and pituitary hormone secretion, gonadal hormone secretion, germ cell development and maturation, erythroid differentiation, insulin secretion, nerve cell survival, embryonic axial development or bone growth, depending on their subunit composition. Inhibins appear to oppose the functions of activins. Inhibin A is a dimer of alpha/INHA and beta-A/INHBA that functions as a feedback regulator in the hypothalamic-pituitary-gonadal (HPG) axis. Inhibits the secretion of FSH from the anterior pituitary gland by acting on pituitary gonadotrope cells. Antagonizes activin A by binding to the proteoglycan, betaglycan, and forming a stable complex with and, thereby, sequestering type II activin receptors while excluding type I receptor. Its function is as follows. Inhibin B is a dimer of alpha and beta-B that plays a crucial role in the regulation of the reproductive system by inhibiting the secretion of follicle-stimulating hormone (FSH) from the anterior pituitary gland. Thereby, maintains reproductive homeostasis in both males and females. Acts as a more potent suppressor of FSH release than inhibin A. Functions as competitive receptor antagonist binding activin type II receptors with high affinity in the presence of the TGF-beta type III coreceptor/TGFBR3L. This chain is Inhibin alpha chain (Inha), found in Rattus norvegicus (Rat).